Consider the following 3914-residue polypeptide: Trichosetin synthetase PKS-NRPS1 (3914 aa).

A Ketosynthase family 3 (KS3) domain is found at 4-420 (NEPIAIIGSA…GTNAHAIIEA (417 aa)). Catalysis depends on for beta-ketoacyl synthase activity residues Cys177, His301, and His340. Residues 525–847 (VLTGQGAQWP…REKDDIQQFA (323 aa)) form a malonyl-CoA:ACP transacylase (MAT) domain region. The N-terminal hotdog fold stretch occupies residues 913 to 1047 (HPILGRRCHD…AHVKASLSVP (135 aa)). The tract at residues 913–1214 (HPILGRRCHD…MELVPFSPAT (302 aa)) is dehydratase (DH) domain. A PKS/mFAS DH domain is found at 913–1216 (HPILGRRCHD…LVPFSPATPE (304 aa)). His946 acts as the Proton acceptor; for dehydratase activity in catalysis. Residues 1062-1216 (LRKVEVDRFY…LVPFSPATPE (155 aa)) are C-terminal hotdog fold. Asp1122 acts as the Proton donor; for dehydratase activity in catalysis. The methyltransferase (MT) domain stretch occupies residues 1364–1593 (EGFGLDLVNK…DLPETKSTEL (230 aa)). A ketoreductase (KR) domain region spans residues 2083–2255 (TFLLIGLSGE…VAASSIDISS (173 aa)). The 81-residue stretch at 2356 to 2436 (LADVKTKADA…DLIEESLNLI (81 aa)) folds into the Carrier 1 domain. Residue Ser2396 is modified to O-(pantetheine 4'-phosphoryl)serine. A disordered region spans residues 2447 to 2518 (EAGSTPTTQP…DSTDNSTPLK (72 aa)). A compositionally biased stretch (polar residues) spans 2481-2500 (QQTGSDSSRSPIDTPLTSME). Positions 2529 to 2956 (SYGQAGFWFL…VQGTNKAADT (428 aa)) are condensation (C) domain. The segment at 2991–3388 (QTIQANSTKV…LLFCDGRLED (398 aa)) is adenylation (A) (KR) domain. One can recognise a Carrier 2 domain in the interval 3502–3579 (GTLTVAEQRL…TMAVVLESCG (78 aa)). Ser3539 is subject to O-(pantetheine 4'-phosphoryl)serine. The interval 3615–3831 (LTGSAGYLGR…VLPTGDIVKA (217 aa)) is reductase (RED) domain.

It in the C-terminal section; belongs to the NRP synthetase family.

It carries out the reaction L-serine + 7 malonyl-CoA + acetyl-CoA + 2 S-adenosyl-L-methionine + ATP + 8 NADPH + 11 H(+) = (5S)-3-[(2E,6R,8E,10E,12E)-2,6-dimethyltetradeca-2,8,10,12-tetraenoyl]-5-(hydroxymethyl)pyrrolidine-2,4-dione + AMP + 2 S-adenosyl-L-homocysteine + 7 CO2 + diphosphate + 8 NADP(+) + 8 CoA + 6 H2O. It functions in the pathway mycotoxin biosynthesis. Functionally, hybrid PKS-NRPS synthetase; part of the gene cluster that mediates the biosynthesis of trichosetin, a trans-fused decalin-containing tetramic acid with antimicrobial activity. The PKS module of PKS-NRPS1 together with the enoylreductase (ER) catalyze the formation of the polyketide unit which is then conjugated to L-serine by the condensation domain of the PKS-NRPS1 NRPS module. Activity of the Dieckmann cyclase domain (RED) results in release of the Dieckmann product intermediate. Diels-Alderase (DA) is involved in endo-selective Diels-Alder cycloaddition to form the decalin ring, leading to the production of N-desmethylequisetin also called trichosetin. The cluster does not contain the equisetin N-methyltransferase and consequently, trichosetin is isolated as final product. The polypeptide is Trichosetin synthetase PKS-NRPS1 (Gibberella fujikuroi (strain CBS 195.34 / IMI 58289 / NRRL A-6831) (Bakanae and foot rot disease fungus)).